The following is a 68-amino-acid chain: MRTEQLTAKAMEKVNFDKYLLANAVGKRAEKIANGAEVLLDYDTSGMKYTDIALREIAEGKITVSLEG.

It belongs to the RNA polymerase subunit omega family. In terms of assembly, the RNAP catalytic core consists of 2 alpha, 1 beta, 1 beta' and 1 omega subunit. When a sigma factor is associated with the core the holoenzyme is formed, which can initiate transcription.

It carries out the reaction RNA(n) + a ribonucleoside 5'-triphosphate = RNA(n+1) + diphosphate. In terms of biological role, promotes RNA polymerase assembly. Latches the N- and C-terminal regions of the beta' subunit thereby facilitating its interaction with the beta and alpha subunits. In Sulfurovum sp. (strain NBC37-1), this protein is DNA-directed RNA polymerase subunit omega.